The primary structure comprises 241 residues: Eukaryotic translation initiation factor 3 subunit J (241 aa).

A disordered region spans residues 1 to 97 (MEEDWEQLSE…EEEDMTPEQK (97 aa)). Acidic residues predominate over residues 28 to 45 (GEDEEEEVKDSWEDEDEL). Positions 31–119 (EEEEVKDSWE…ESDLKNALDT (89 aa)) form a coiled coil. Basic and acidic residues-rich tracts occupy residues 46–58 (EEKK…ETPK) and 69–87 (IADK…RLEK).

Belongs to the eIF-3 subunit J family. As to quaternary structure, component of the eukaryotic translation initiation factor 3 (eIF-3) complex.

It localises to the cytoplasm. In terms of biological role, component of the eukaryotic translation initiation factor 3 (eIF-3) complex, which is involved in protein synthesis of a specialized repertoire of mRNAs and, together with other initiation factors, stimulates binding of mRNA and methionyl-tRNAi to the 40S ribosome. The eIF-3 complex specifically targets and initiates translation of a subset of mRNAs involved in cell proliferation. The sequence is that of Eukaryotic translation initiation factor 3 subunit J from Aedes aegypti (Yellowfever mosquito).